Here is a 436-residue protein sequence, read N- to C-terminus: Ribulose bisphosphate carboxylase large chain (436 aa).

The substrate site is built by N104 and T154. The active-site Proton acceptor is K156. K158 provides a ligand contact to substrate. Mg(2+) is bound by residues K182, D184, and E185. K182 bears the N6-carboxylysine mark. Catalysis depends on H275, which acts as the Proton acceptor. Residues R276, H308, and S360 each coordinate substrate.

It belongs to the RuBisCO large chain family. Type I subfamily. In terms of assembly, heterohexadecamer of 8 large chains and 8 small chains. Mg(2+) is required as a cofactor.

It is found in the plastid. The protein localises to the chloroplast. The enzyme catalyses 2 (2R)-3-phosphoglycerate + 2 H(+) = D-ribulose 1,5-bisphosphate + CO2 + H2O. The catalysed reaction is D-ribulose 1,5-bisphosphate + O2 = 2-phosphoglycolate + (2R)-3-phosphoglycerate + 2 H(+). In terms of biological role, ruBisCO catalyzes two reactions: the carboxylation of D-ribulose 1,5-bisphosphate, the primary event in carbon dioxide fixation, as well as the oxidative fragmentation of the pentose substrate in the photorespiration process. Both reactions occur simultaneously and in competition at the same active site. The polypeptide is Ribulose bisphosphate carboxylase large chain (Euglena myxocylindracea).